Consider the following 156-residue polypeptide: Endoribonuclease YbeY (156 aa).

His-115, His-119, and His-125 together coordinate Zn(2+).

It belongs to the endoribonuclease YbeY family. Requires Zn(2+) as cofactor.

The protein localises to the cytoplasm. Single strand-specific metallo-endoribonuclease involved in late-stage 70S ribosome quality control and in maturation of the 3' terminus of the 16S rRNA. The protein is Endoribonuclease YbeY of Mannheimia succiniciproducens (strain KCTC 0769BP / MBEL55E).